Here is a 225-residue protein sequence, read N- to C-terminus: Sirohydrochlorin ferrochelatase, chloroplastic (225 aa).

A chloroplast-targeting transit peptide spans 1 to 46; that stretch reads MTTQSQFLVNLSYGGLASQSNLRANNRVSPSSCQITRTNRSWALPV. Fe cation-binding residues include histidine 89 and histidine 155. Residues cysteine 199, cysteine 210, cysteine 213, and cysteine 219 each coordinate [4Fe-4S] cluster.

Belongs to the CbiX family. SirB subfamily. As to quaternary structure, homodimer. [4Fe-4S] cluster serves as cofactor.

It is found in the plastid. The protein resides in the chloroplast. It carries out the reaction siroheme + 2 H(+) = sirohydrochlorin + Fe(2+). It participates in porphyrin-containing compound metabolism; siroheme biosynthesis; siroheme from sirohydrochlorin: step 1/1. In terms of biological role, chelates iron to the siroheme precursor. Catalyzes the last step of the siroheme biosynthesis. Unlike its counterparts in bacteria, contains an [Fe-S] cluster which is not involved directly in the enzymatic reaction, but may play regulatory role in iron, sulfur and tetrapyrrole metabolism. The [Fe-S] cluster is required for normal plant growth. This is Sirohydrochlorin ferrochelatase, chloroplastic from Arabidopsis thaliana (Mouse-ear cress).